Here is a 180-residue protein sequence, read N- to C-terminus: UPF0227 protein YcfP (180 aa).

The protein belongs to the UPF0227 family.

The chain is UPF0227 protein YcfP from Salmonella agona (strain SL483).